Reading from the N-terminus, the 147-residue chain is MKALIILGFLFLSVAVQGKVFERCELARTLKKLGLDGYKGVSLANWLCLTKWESSYNTKATNYNPGSESTDYGIFQINSKWWCNDGKTPNAVDGCHVSCSELMENDIAKAVACAKQIVSEQGITAWVAWKSHCRDHDVSSYVEGCTL.

A signal peptide spans 1–18; the sequence is MKALIILGFLFLSVAVQG. The C-type lysozyme domain occupies 19–147; the sequence is KVFERCELAR…VSSYVEGCTL (129 aa). Disulfide bonds link cysteine 24–cysteine 145, cysteine 48–cysteine 133, cysteine 83–cysteine 99, and cysteine 95–cysteine 113. Active-site residues include glutamate 53 and aspartate 71.

This sequence belongs to the glycosyl hydrolase 22 family. In terms of assembly, monomer. As to expression, stomach-specific.

The catalysed reaction is Hydrolysis of (1-&gt;4)-beta-linkages between N-acetylmuramic acid and N-acetyl-D-glucosamine residues in a peptidoglycan and between N-acetyl-D-glucosamine residues in chitodextrins.. In terms of biological role, lysozymes have primarily a bacteriolytic function; those in tissues and body fluids are associated with the monocyte-macrophage system and enhance the activity of immunoagents. The polypeptide is Lysozyme C-1 (LYZ1) (Bos taurus (Bovine)).